A 546-amino-acid polypeptide reads, in one-letter code: MGSRNSSSAGSGSGDPSEGLTRRGAGLRRSEEEEEEDEDVDLAQVLAYLLRRGQVRLVQGGGAANLQFIQALLDSEEENDRAWDGRLGDRYNPPVDATPDTRELECNEIKTQVELATGQLGLRRAAQKHSFPRMLHQRERGLCHRGSFSLGEQSRVISHFLPNDLGFTDSYSQKAFCGIYSKDGQIFMSACQDQTIRLYDCRYGRFRKFKSIKARDVGWSVLDVAFTPDGSHFLYSSWSDYIHICNIYGEGDTHTALDLRPDERRFAVFSIAVSSDGREVLGGANDGCLYVFDREQNRRTLQIESHEDDVNAVAFADISSQILFSGGDDAICKVWDRRTMREDDPKPVGALAGHQDGITFIDSKGDARYLISNSKDQTIKLWDIRRFSSREGMEASRQAATQQNWDYRWQQVPKKAWRKLKLPGDSSLMTYRGHGVLHTLIRCRFSPIHSTGQQFIYSGCSTGKVVVYDLLSGHIVKKLTNHKACVRDVSWHPFEEKIVSSSWDGNLRLWQYRQAEYFQDDMPESEECASAPAPVPRSSTPFSSPQ.

Over residues 1–19 (MGSRNSSSAGSGSGDPSEG) the composition is skewed to low complexity. The disordered stretch occupies residues 1 to 40 (MGSRNSSSAGSGSGDPSEGLTRRGAGLRRSEEEEEEDEDV). Ser75 carries the phosphoserine modification. WD repeat units lie at residues 170 to 210 (SYSQ…RKFK), 216 to 258 (DVGW…TALD), 263 to 302 (ERRF…RTLQ), 305 to 345 (SHED…EDDP), 353 to 392 (GHQD…SREG), 435 to 480 (GVLH…KKLT), and 481 to 520 (NHKA…YFQD). The segment at 523 to 546 (PESEECASAPAPVPRSSTPFSSPQ) is disordered. The segment covering 537 to 546 (RSSTPFSSPQ) has biased composition (polar residues).

As to quaternary structure, interacts with DDB1 and CUL4A.

The protein operates within protein modification; protein ubiquitination. Its function is as follows. May function as a substrate receptor for CUL4-DDB1 E3 ubiquitin-protein ligase complex. The protein is DDB1- and CUL4-associated factor 11 (DCAF11) of Pongo abelii (Sumatran orangutan).